Reading from the N-terminus, the 146-residue chain is Globin (146 aa).

The residue at position 1 (Ala-1) is an N-acetylalanine. The Globin domain maps to 1–146; the sequence is ALSAAEAEVV…IIDAMKKAGK (146 aa). A heme b-binding site is contributed by His-95.

It belongs to the globin family. In terms of assembly, monomer.

The chain is Globin from Dolabella auricularia (Shoulderblade sea cat).